The chain runs to 996 residues: MSIKKRARAGSKSDDIGNKTPKKNGIEHEATKSSETVIEMTPSGPIAESKKWKESIARVVKSVVSIRFSQVAAFDTDESGTGEASAFVVDAKNGYMLTNRHVVCAGPFVGHAVFDNHEEVEVFPVYRDPVHDFGFLRFDPKKIRYMNVEQLELRPDLAKVGTEIRVVGNDAAEKLSILAGWISRIDRNVPDYGELTYCDFNTNYIQAAANASGGSSGSPVVERNGNVVALQAGGHMIAATDYFLPLDRPLRALRCLQNNTPITRGTIQAQFLIKTFDECSRLGLDSAMEEKVRTLFPEATSMLVVETVLPEGPSFKKLKEGDILLYVNSMILINLIELESILDESVGKDVVLTVQRGSELVELTCTAQSTHDIAPDRYVEVCGAKFHNLSYQLARQYALPVKGVFISEPAGSFRLEGPEYGYILDSIAYKPVPDLDTFIEVMRDIPDRSRVAVGYHFIHDKHSLITDVVEIDRHWLKAFRMVTRNDETGLWDFKNLGDPLPAEPSKPCTTSIPKLNVENFGPTANIINCFVKVLYYMPLHLDGSRKSRKKGTALVLDKDKGLAVTSRSTVPYDLGDLTITVADSIQIPAEVVHLHPTQNLAFIKYDPKLLGDTPIQAAKLKDYYVSQGDPVNFFGFNSKSRVVAAKTSVTDVITMVIPSSPMPRFRAINFESITVESNLSTQCGSGVLTDDDGLVVALWLTHYGEQTSRGTDVKYHLGLASPVVLSTLRRLQSGVNVNPRILNVEFRAIQLAQARSLGLPAERIRKIETESGKKHQLFMITHVEAGTPRILTDGDIIISANGKSITRIRDLQVDDVTEVDMEILREGKVQTVKVPTFPSDNCETNRVVICWGATLQAPHRAVRLQIEDLPSNVFVTNRGRGSPADQYDLGAAQFITAVNGVTTLNLEDFVREIRKIDDNSYVRVSTSTFDKVPVVLTIKMNKHYFPTIDLVQDAKAENGWRAVQYDEVGEKKNPSMGFTIDEEVDDNTFDTEGEQQ.

Positions 1–35 are disordered; that stretch reads MSIKKRARAGSKSDDIGNKTPKKNGIEHEATKSSE. PDZ domains follow at residues 280–358, 745–827, and 860–930; these read SRLG…QRGS, EFRA…LREG, and RAVR…STFD. The interval 972–996 is disordered; that stretch reads KNPSMGFTIDEEVDDNTFDTEGEQQ. Residues 980–996 show a composition bias toward acidic residues; sequence IDEEVDDNTFDTEGEQQ.

Belongs to the peptidase S1C family.

The chain is PDZ domain-containing protein C23G3.12c from Schizosaccharomyces pombe (strain 972 / ATCC 24843) (Fission yeast).